The following is a 100-amino-acid chain: Urease subunit gamma (100 aa).

The protein belongs to the urease gamma subunit family. As to quaternary structure, heterotrimer of UreA (gamma), UreB (beta) and UreC (alpha) subunits. Three heterotrimers associate to form the active enzyme.

It localises to the cytoplasm. It carries out the reaction urea + 2 H2O + H(+) = hydrogencarbonate + 2 NH4(+). Its pathway is nitrogen metabolism; urea degradation; CO(2) and NH(3) from urea (urease route): step 1/1. This Corynebacterium glutamicum (strain R) protein is Urease subunit gamma.